Consider the following 328-residue polypeptide: 4-hydroxythreonine-4-phosphate dehydrogenase (328 aa).

Substrate-binding residues include histidine 134 and threonine 135. The a divalent metal cation site is built by histidine 164, histidine 209, and histidine 264. Residues lysine 272, asparagine 281, and arginine 290 each coordinate substrate.

The protein belongs to the PdxA family. In terms of assembly, homodimer. The cofactor is Zn(2+). Requires Mg(2+) as cofactor. It depends on Co(2+) as a cofactor.

The protein localises to the cytoplasm. The enzyme catalyses 4-(phosphooxy)-L-threonine + NAD(+) = 3-amino-2-oxopropyl phosphate + CO2 + NADH. The protein operates within cofactor biosynthesis; pyridoxine 5'-phosphate biosynthesis; pyridoxine 5'-phosphate from D-erythrose 4-phosphate: step 4/5. Functionally, catalyzes the NAD(P)-dependent oxidation of 4-(phosphooxy)-L-threonine (HTP) into 2-amino-3-oxo-4-(phosphooxy)butyric acid which spontaneously decarboxylates to form 3-amino-2-oxopropyl phosphate (AHAP). The polypeptide is 4-hydroxythreonine-4-phosphate dehydrogenase (Shewanella denitrificans (strain OS217 / ATCC BAA-1090 / DSM 15013)).